The chain runs to 74 residues: Protein kish-B (74 aa).

The first 22 residues, 1 to 22, serve as a signal peptide directing secretion; it reads MTNVYSLDGLLVFALLFVCTCA. The Extracellular segment spans residues 23–52; it reads YFRKVPRLRSWLLSEKKGVWGVFYKAAVIG. Residues 53–73 traverse the membrane as a helical segment; the sequence is SRLHLAVSISCIAMAFYVLFI. Residue K74 is a topological domain, cytoplasmic.

This sequence belongs to the KISH family.

The protein localises to the golgi apparatus membrane. In terms of biological role, involved in the early part of the secretory pathway. This Xenopus laevis (African clawed frog) protein is Protein kish-B (tmem167b).